Reading from the N-terminus, the 291-residue chain is ATP synthase gamma chain (291 aa).

This sequence belongs to the ATPase gamma chain family. F-type ATPases have 2 components, CF(1) - the catalytic core - and CF(0) - the membrane proton channel. CF(1) has five subunits: alpha(3), beta(3), gamma(1), delta(1), epsilon(1). CF(0) has three main subunits: a, b and c.

The protein localises to the cell inner membrane. Its function is as follows. Produces ATP from ADP in the presence of a proton gradient across the membrane. The gamma chain is believed to be important in regulating ATPase activity and the flow of protons through the CF(0) complex. The sequence is that of ATP synthase gamma chain from Sulfurihydrogenibium sp. (strain YO3AOP1).